The following is a 198-amino-acid chain: Large ribosomal subunit protein bL12m (198 aa).

The N-terminal 36 residues, 1–36 (MLPAAARPLWGPCLGLRAAAFRLARRQVPCVCAVRH), are a transit peptide targeting the mitochondrion. N6-acetyllysine occurs at positions 125, 138, 142, and 144. Position 150 is an N6-acetyllysine; alternate (K150). K150 is subject to N6-succinyllysine; alternate. K150 participates in a covalent cross-link: Glycyl lysine isopeptide (Lys-Gly) (interchain with G-Cter in ubiquitin). An N6-succinyllysine modification is found at K162. Residues K163 and K173 each carry the N6-acetyllysine modification. N6-acetyllysine; alternate is present on K178. N6-succinyllysine; alternate is present on K178. N6-acetyllysine is present on K185.

It belongs to the bacterial ribosomal protein bL12 family. In terms of assembly, component of the mitochondrial large ribosomal subunit (mt-LSU). Mature mammalian 55S mitochondrial ribosomes consist of a small (28S) and a large (39S) subunit. The 28S small subunit contains a 12S ribosomal RNA (12S mt-rRNA) and 30 different proteins. The 39S large subunit contains a 16S rRNA (16S mt-rRNA), a copy of mitochondrial valine transfer RNA (mt-tRNA(Val)), which plays an integral structural role, and 52 different proteins. bL12m interacts with NOA1. Post-translationally, two mature forms are produced by differential two-step proteolytic cleavage. Cleaved by the mitochondrial processing protease to produce the long mature form and subsequently by the mitochondrial intermediate protease to produce the short mature form. In the presence of CUL3, undergoes 'Lys-63'-linked ubiquitination at Lys-150 which results in proteasomal degradation.

The protein localises to the mitochondrion matrix. Its function is as follows. As a component of the mitochondrial large ribosomal subunit, plays a role in mitochondrial translation. When present in mitochondria as a free protein not associated with the ribosome, associates with mitochondrial RNA polymerase POLRMT to activate transcription. Required for POLRMT stability. The protein is Large ribosomal subunit protein bL12m (MRPL12) of Homo sapiens (Human).